The sequence spans 161 residues: Phosphopantetheine adenylyltransferase (161 aa).

Position 9 (serine 9) interacts with substrate. Residues 9 to 10 and histidine 17 each bind ATP; that span reads SF. Substrate-binding residues include lysine 41, threonine 74, and arginine 88. Residues 89–91, glutamate 99, and 124–130 contribute to the ATP site; these read GVR and NSFVASS.

This sequence belongs to the bacterial CoaD family. As to quaternary structure, homohexamer. Requires Mg(2+) as cofactor.

It localises to the cytoplasm. It carries out the reaction (R)-4'-phosphopantetheine + ATP + H(+) = 3'-dephospho-CoA + diphosphate. It functions in the pathway cofactor biosynthesis; coenzyme A biosynthesis; CoA from (R)-pantothenate: step 4/5. Its function is as follows. Reversibly transfers an adenylyl group from ATP to 4'-phosphopantetheine, yielding dephospho-CoA (dPCoA) and pyrophosphate. This Lactobacillus acidophilus (strain ATCC 700396 / NCK56 / N2 / NCFM) protein is Phosphopantetheine adenylyltransferase.